Consider the following 309-residue polypeptide: MDDKAFTKDLDQWVEQLNECKQLNENQVRTLCEKAKEILTKESNVQEVRCPVTVCGDVHGQFHDLMELFRIGGKSPDTNYLFMGDYVDRGYYSVETVTLLVALKVRYPERITILRGNHESRQITQVYGFYDECLRKYGNANVWKYFTDLFDYLPLTALVDGQIFCLHGGLSPSIDTLDHIRALDRLQEVPHEGPMCDLLWSDPDDRGGWGISPRGAGYTFGQDISETFNHANGLTLVSRAHQLVMEGYNWCHDRNVVTIFSAPNYCYRCGNQAAIMELDDTLKYSFLQFDPAPRRGEPHVTRRTPDYFL.

Residues aspartate 57, histidine 59, aspartate 85, and asparagine 117 each contribute to the Mn(2+) site. Histidine 118 serves as the catalytic Proton donor. Positions 167 and 241 each coordinate Mn(2+). Residue tyrosine 307 is modified to Phosphotyrosine. Leucine methyl ester is present on leucine 309.

Belongs to the PPP phosphatase family. PP-1 subfamily. PP2A consists of a common heterodimeric core enzyme (composed of a 36 kDa catalytic subunit (subunit C) and a 65 kDa constant regulatory subunit (PR65) (subunit A)) that associates with a variety of regulatory subunits. Proteins that associate with the core dimer include three families of regulatory subunits B (the R2/B/PR55/B55, R3/B''/PR72/PR130/PR59 and R5/B'/B56 families), the 48 kDa variable regulatory subunit, viral proteins, and cell signaling molecules. Binds PPME1. May indirectly interact with SGO1, most probably through regulatory B56 subunits. Found in a complex with at least ARL2, PPP2CB, PPP2R1A, PPP2R2A, PPP2R5E and TBCD. Interacts with TBCD. Interacts with CTTNBP2NL. Interacts with PTPA. Part of the core of STRIPAK complexes composed of PP2A catalytic and scaffolding subunits, the striatins (PP2A regulatory subunits), the striatin-associated proteins MOB4, STRIP1 and STRIP2, PDCD10 and members of the STE20 kinases, such as STK24 and STK26. Mn(2+) is required as a cofactor. Reversibly methyl esterified on Leu-309 by leucine carboxyl methyltransferase 1 (LCMT1) and protein phosphatase methylesterase 1 (PPME1). Carboxyl methylation influences the affinity of the catalytic subunit for the different regulatory subunits, thereby modulating the PP2A holoenzyme's substrate specificity, enzyme activity and cellular localization. Post-translationally, phosphorylation of either threonine (by autophosphorylation-activated protein kinase) or tyrosine results in inactivation of the phosphatase. Auto-dephosphorylation has been suggested as a mechanism for reactivation. In terms of processing, may be monoubiquitinated by NOSIP.

It localises to the cytoplasm. The protein localises to the nucleus. The protein resides in the chromosome. Its subcellular location is the centromere. It is found in the cytoskeleton. It localises to the spindle pole. It catalyses the reaction O-phospho-L-seryl-[protein] + H2O = L-seryl-[protein] + phosphate. The catalysed reaction is O-phospho-L-threonyl-[protein] + H2O = L-threonyl-[protein] + phosphate. Functionally, catalytic subunit of protein phosphatase 2A (PP2A), a serine/threonine phosphatase involved in the regulation of a wide variety of enzymes, signal transduction pathways, and cellular events. PP2A can modulate the activity of phosphorylase B kinase, casein kinase 2, mitogen-stimulated S6 kinase, and MAP-2 kinase. Part of the striatin-interacting phosphatase and kinase (STRIPAK) complexes. STRIPAK complexes have critical roles in protein (de)phosphorylation and are regulators of multiple signaling pathways including Hippo, MAPK, nuclear receptor and cytoskeleton remodeling. Different types of STRIPAK complexes are involved in a variety of biological processes such as cell growth, differentiation, apoptosis, metabolism and immune regulation. The polypeptide is Serine/threonine-protein phosphatase 2A catalytic subunit beta isoform (PPP2CB) (Bos taurus (Bovine)).